Here is a 201-residue protein sequence, read N- to C-terminus: Large ribosomal subunit protein uL4 (201 aa).

The segment at 44-68 (RAQKSRADVSGSGRKPWRQKGTGRA) is disordered.

It belongs to the universal ribosomal protein uL4 family. Part of the 50S ribosomal subunit.

In terms of biological role, one of the primary rRNA binding proteins, this protein initially binds near the 5'-end of the 23S rRNA. It is important during the early stages of 50S assembly. It makes multiple contacts with different domains of the 23S rRNA in the assembled 50S subunit and ribosome. Functionally, forms part of the polypeptide exit tunnel. The sequence is that of Large ribosomal subunit protein uL4 from Buchnera aphidicola subsp. Schizaphis graminum (strain Sg).